A 528-amino-acid chain; its full sequence is Phosphoenolpyruvate carboxykinase (ATP) (528 aa).

3 residues coordinate substrate: R56, Y192, and K198. Residues K198, H217, and 233–241 each bind ATP; that span reads GLSGTGKTT. Residues K198 and H217 each coordinate Mn(2+). Position 254 (D254) interacts with Mn(2+). ATP is bound by residues E282, R319, and T444. Residue R319 participates in substrate binding.

Belongs to the phosphoenolpyruvate carboxykinase (ATP) family. Mn(2+) serves as cofactor.

Its subcellular location is the cytoplasm. It carries out the reaction oxaloacetate + ATP = phosphoenolpyruvate + ADP + CO2. Its pathway is carbohydrate biosynthesis; gluconeogenesis. Functionally, involved in the gluconeogenesis. Catalyzes the conversion of oxaloacetate (OAA) to phosphoenolpyruvate (PEP) through direct phosphoryl transfer between the nucleoside triphosphate and OAA. This chain is Phosphoenolpyruvate carboxykinase (ATP), found in Lysinibacillus sphaericus (strain C3-41).